Reading from the N-terminus, the 407-residue chain is Cytochrome P450 NovI (407 aa).

A heme-binding site is contributed by cysteine 357.

It belongs to the cytochrome P450 family. It depends on heme as a cofactor.

It participates in antibiotic biosynthesis; novobiocin biosynthesis. Together with NovH, involved in the formation of a beta-OH-Tyr intermediate in the novobiocin biosynthesis pathway, an aminocoumarin family antibiotic that targets bacterial DNA gyrases. Acts as a cytochrome P450-type monooxygenase with specificity for the tyrosyl-S-NovH acyl enzyme (L-Tyr-S-NovH) to form the beta-OH-Tyr intermediate (L-beta-OH-Tyr-S-NovH). In Streptomyces niveus (Streptomyces spheroides), this protein is Cytochrome P450 NovI (novI).